Consider the following 429-residue polypeptide: Adenylosuccinate synthetase (429 aa).

GTP is bound by residues 12–18 and 40–42; these read GDEGKGK and GHT. Aspartate 13 (proton acceptor) is an active-site residue. Positions 13 and 40 each coordinate Mg(2+). IMP contacts are provided by residues 13-16, 38-41, threonine 128, arginine 142, glutamine 223, threonine 238, and arginine 302; these read DEGK and NAGH. Catalysis depends on histidine 41, which acts as the Proton donor. Residue 298 to 304 participates in substrate binding; it reads VNTGRKR. GTP-binding positions include arginine 304, 330-332, and 412-414; these read KLD and GVG.

This sequence belongs to the adenylosuccinate synthetase family. As to quaternary structure, homodimer. Requires Mg(2+) as cofactor.

It is found in the cytoplasm. It carries out the reaction IMP + L-aspartate + GTP = N(6)-(1,2-dicarboxyethyl)-AMP + GDP + phosphate + 2 H(+). It functions in the pathway purine metabolism; AMP biosynthesis via de novo pathway; AMP from IMP: step 1/2. Its function is as follows. Plays an important role in the de novo pathway of purine nucleotide biosynthesis. Catalyzes the first committed step in the biosynthesis of AMP from IMP. This Corynebacterium diphtheriae (strain ATCC 700971 / NCTC 13129 / Biotype gravis) protein is Adenylosuccinate synthetase.